A 174-amino-acid chain; its full sequence is Large ribosomal subunit protein uL10 (174 aa).

The protein belongs to the universal ribosomal protein uL10 family. As to quaternary structure, part of the ribosomal stalk of the 50S ribosomal subunit. The N-terminus interacts with L11 and the large rRNA to form the base of the stalk. The C-terminus forms an elongated spine to which L12 dimers bind in a sequential fashion forming a multimeric L10(L12)X complex.

Functionally, forms part of the ribosomal stalk, playing a central role in the interaction of the ribosome with GTP-bound translation factors. In Anaeromyxobacter dehalogenans (strain 2CP-1 / ATCC BAA-258), this protein is Large ribosomal subunit protein uL10.